We begin with the raw amino-acid sequence, 169 residues long: Putative lipocalin R877 (169 aa).

A signal peptide spans 1-18 (MWIIILIVIIVIITIIFS).

Belongs to the calycin superfamily. Lipocalin family.

The protein localises to the secreted. The protein resides in the virion. Functionally, could play a role in the transport of a small ligand. The chain is Putative lipocalin R877 from Acanthamoeba polyphaga mimivirus (APMV).